The sequence spans 178 residues: Caveolin-1 (178 aa).

Ser-2 bears the N-acetylserine mark. Residue Ser-2 is modified to Phosphoserine. Positions 2 to 94 (SGGKYVDSEG…WKASFTTFTV (93 aa)) are required for homooligomerization. At 2–104 (SGGKYVDSEG…TKYWFYRLLS (103 aa)) the chain is on the cytoplasmic side. The residue at position 5 (Lys-5) is an N6-acetyllysine; alternate. A Glycyl lysine isopeptide (Lys-Gly) (interchain with G-Cter in ubiquitin); alternate cross-link involves residue Lys-5. Tyr-6 carries the post-translational modification Phosphotyrosine. Phosphoserine is present on Ser-9. Position 14 is a phosphotyrosine; by ABL1 (Tyr-14). Tyr-25 is modified (phosphotyrosine). Residues Lys-26 and Lys-30 each participate in a glycyl lysine isopeptide (Lys-Gly) (interchain with G-Cter in ubiquitin) cross-link. Ser-37 is modified (phosphoserine). Glycyl lysine isopeptide (Lys-Gly) (interchain with G-Cter in ubiquitin) cross-links involve residues Lys-39, Lys-47, and Lys-57. Residues 82 to 94 (DGIWKASFTTFTV) form an interaction with CAVIN3 region. The segment at residues 105–125 (ALFGIPMALIWGIYFAILSFL) is an intramembrane region (helical). The Cytoplasmic portion of the chain corresponds to 126–178 (HIWAVVPCIKSFLIEIQCISRVYSIYVHTVCDPLFEAVGKIFSNVRINLQKEI). Positions 131–142 (VPCIKSFLIEIQ) are interacts with SPRY1, SPRY2, SPRY3 and SPRY4. S-palmitoyl cysteine attachment occurs at residues Cys-133, Cys-143, and Cys-156. Residues 149 to 160 (SIYVHTVCDPLF) are interacts with SPRY1, SPRY2, and SPRY4. Residues 167–178 (FSNVRINLQKEI) form an interacts with SPRY1, SPRY2, SPRY3 and SPRY4 region.

It belongs to the caveolin family. As to quaternary structure, homooligomer. Interacts (via the N-terminus) with DPP4; the interaction is direct. Forms a stable heterooligomeric complex with CAV2 that targets to lipid rafts and drives caveolae formation. Interacts with PACSIN2; this interaction induces membrane tubulation. Interacts with BMX, BTK, CTNNB1, CDH1, GLIPR2, JUP, NOSTRIN, SNAP25 and STX1A. Interacts with SLC7A9. Interacts with TGFBR1. Interacts with CAVIN3 (via leucine-zipper domain) in a cholesterol-sensitive manner. Interacts with CAVIN1. Interacts with EHD2 in a cholesterol-dependent manner. Forms a ternary complex with UBXN6 and VCP; mediates CAV1 targeting to lysosomes for degradation. Interacts with ABCG1; this interaction regulates ABCG1-mediated cholesterol efflux. Interacts with NEU3; this interaction enhances NEU3 sialidase activity within caveola. Interacts (via C-terminus) with SPRY1, SPRY2 (via C-terminus), SPRY3, and SPRY4. Interacts with IGFBP5; this interaction allows trafficking of IGFBP5 from the plasma membrane to the nucleus. In terms of processing, phosphorylated at Tyr-14 by ABL1 in response to oxidative stress. Ubiquitinated. Undergo monoubiquitination and multi- and/or polyubiquitination. Monoubiquitination of N-terminal lysines promotes integration in a ternary complex with UBXN6 and VCP which promotes oligomeric CAV1 targeting to lysosomes for degradation. Ubiquitinated by ZNRF1; leading to degradation and modulation of the TLR4-mediated immune response.

Its subcellular location is the golgi apparatus membrane. The protein localises to the cell membrane. It localises to the membrane. The protein resides in the caveola. It is found in the membrane raft. In terms of biological role, may act as a scaffolding protein within caveolar membranes. Forms a stable heterooligomeric complex with CAV2 that targets to lipid rafts and drives caveolae formation. Mediates the recruitment of CAVIN proteins (CAVIN1/2/3/4) to the caveolae. Interacts directly with G-protein alpha subunits and can functionally regulate their activity. Involved in the costimulatory signal essential for T-cell receptor (TCR)-mediated T-cell activation. Its binding to DPP4 induces T-cell proliferation and NF-kappa-B activation in a T-cell receptor/CD3-dependent manner. Recruits CTNNB1 to caveolar membranes and may regulate CTNNB1-mediated signaling through the Wnt pathway. Negatively regulates TGFB1-mediated activation of SMAD2/3 by mediating the internalization of TGFBR1 from membrane rafts leading to its subsequent degradation. Binds 20(S)-hydroxycholesterol (20(S)-OHC). The chain is Caveolin-1 (CAV1) from Chlorocebus aethiops (Green monkey).